A 547-amino-acid chain; its full sequence is Chaperonin GroEL (547 aa).

ATP is bound by residues 30–33 (TLGP), lysine 51, 87–91 (DGTTT), glycine 415, and aspartate 496. Residues 527–547 (SDKAEPMPMRGGMGGMGGMDF) are disordered. Residues 537 to 547 (GGMGGMGGMDF) show a composition bias toward gly residues.

The protein belongs to the chaperonin (HSP60) family. Forms a cylinder of 14 subunits composed of two heptameric rings stacked back-to-back. Interacts with the co-chaperonin GroES.

It is found in the cytoplasm. The enzyme catalyses ATP + H2O + a folded polypeptide = ADP + phosphate + an unfolded polypeptide.. Its function is as follows. Together with its co-chaperonin GroES, plays an essential role in assisting protein folding. The GroEL-GroES system forms a nano-cage that allows encapsulation of the non-native substrate proteins and provides a physical environment optimized to promote and accelerate protein folding. This is Chaperonin GroEL from Rickettsia rickettsii (strain Sheila Smith).